The sequence spans 311 residues: Porphobilinogen deaminase (311 aa).

Position 241 is an S-(dipyrrolylmethanemethyl)cysteine (C241).

This sequence belongs to the HMBS family. Monomer. Dipyrromethane serves as cofactor.

It catalyses the reaction 4 porphobilinogen + H2O = hydroxymethylbilane + 4 NH4(+). Its pathway is porphyrin-containing compound metabolism; protoporphyrin-IX biosynthesis; coproporphyrinogen-III from 5-aminolevulinate: step 2/4. Tetrapolymerization of the monopyrrole PBG into the hydroxymethylbilane pre-uroporphyrinogen in several discrete steps. This is Porphobilinogen deaminase from Bacillus pumilus (strain SAFR-032).